Here is a 437-residue protein sequence, read N- to C-terminus: Na(+)/H(+) antiporter NhaA (437 aa).

The next 11 membrane-spanning stretches (helical) occupy residues 12–32, 65–85, 103–123, 133–153, 162–182, 186–206, 214–234, 308–328, 333–353, 377–397, and 412–432; these read SMNI…AVIA, LTMI…MVGL, ALPF…YSMV, GLAI…SLLG, IFLT…IAIF, HVAY…YFIG, IFFL…GIHS, GAVN…VMFS, VIGG…FLGI, ISGV…IANL, and LGVL…LHWV.

Belongs to the NhaA Na(+)/H(+) (TC 2.A.33) antiporter family.

The protein resides in the cell inner membrane. The catalysed reaction is Na(+)(in) + 2 H(+)(out) = Na(+)(out) + 2 H(+)(in). Functionally, na(+)/H(+) antiporter that extrudes sodium in exchange for external protons. The chain is Na(+)/H(+) antiporter NhaA from Bacteroides fragilis (strain ATCC 25285 / DSM 2151 / CCUG 4856 / JCM 11019 / LMG 10263 / NCTC 9343 / Onslow / VPI 2553 / EN-2).